The following is a 523-amino-acid chain: Nitrogenase molybdenum-iron protein beta chain (523 aa).

[8Fe-7S] cluster contacts are provided by Cys-70, Cys-95, Cys-153, and Ser-188.

It belongs to the NifD/NifK/NifE/NifN family. As to quaternary structure, tetramer of two alpha and two beta chains. Forms complex with the iron protein (nitrogenase component 2). It depends on [8Fe-7S] cluster as a cofactor.

The enzyme catalyses N2 + 8 reduced [2Fe-2S]-[ferredoxin] + 16 ATP + 16 H2O = H2 + 8 oxidized [2Fe-2S]-[ferredoxin] + 2 NH4(+) + 16 ADP + 16 phosphate + 6 H(+). Its activity is regulated as follows. Nitrogenase holoenzyme is subject to 'conformational protection' by FeSII; under oxidizing conditions FeSII binds to the holoenzyme and reversibly protects it from oxidation. Functionally, this molybdenum-iron protein is part of the nitrogenase complex that catalyzes the key enzymatic reactions in nitrogen fixation. This chain is Nitrogenase molybdenum-iron protein beta chain (nifK), found in Azotobacter vinelandii.